Consider the following 208-residue polypeptide: Redox-sensing transcriptional repressor Rex (208 aa).

A DNA-binding region (H-T-H motif) is located at residues 15-54; the sequence is SYYMCLERLLDEGVEVVSSEELARRLDLKASQIRKDLSYF. Residue 89–94 coordinates NAD(+); sequence GAGNIG.

It belongs to the transcriptional regulatory Rex family. As to quaternary structure, homodimer.

Its subcellular location is the cytoplasm. In terms of biological role, modulates transcription in response to changes in cellular NADH/NAD(+) redox state. The sequence is that of Redox-sensing transcriptional repressor Rex from Thermotoga petrophila (strain ATCC BAA-488 / DSM 13995 / JCM 10881 / RKU-1).